The sequence spans 180 residues: ATP-dependent protease subunit HslV (180 aa).

Thr-7 is a catalytic residue. Na(+)-binding residues include Ala-165, Cys-168, and Thr-171.

The protein belongs to the peptidase T1B family. HslV subfamily. A double ring-shaped homohexamer of HslV is capped on each side by a ring-shaped HslU homohexamer. The assembly of the HslU/HslV complex is dependent on binding of ATP.

It localises to the cytoplasm. The catalysed reaction is ATP-dependent cleavage of peptide bonds with broad specificity.. With respect to regulation, allosterically activated by HslU binding. Protease subunit of a proteasome-like degradation complex believed to be a general protein degrading machinery. This is ATP-dependent protease subunit HslV from Geobacillus kaustophilus (strain HTA426).